A 215-amino-acid polypeptide reads, in one-letter code: Eukaryotic translation initiation factor 4E (215 aa).

The segment at 1–27 is disordered; it reads MAERDSEPRVNIIRPDDEPEVEEERVP. Phosphoserine; by PKC is present on Ser-207.

It belongs to the eukaryotic initiation factor 4E family. In terms of assembly, eIF4F is a multi-subunit complex, the composition of which varies with external and internal environmental conditions. It is composed of at least eIF4A, eIF4E and eIF4G. eIF4E is also known to interact with other partners. Phosphorylation increases the ability of the protein to bind to mRNA caps and to form the eIF4F complex.

Recognizes and binds the 7-methylguanosine-containing mRNA cap during an early step in the initiation of protein synthesis and facilitates ribosome binding by inducing the unwinding of the mRNAs secondary structures. This Aplysia californica (California sea hare) protein is Eukaryotic translation initiation factor 4E.